Consider the following 1367-residue polypeptide: Histone acetyltransferase HAC2 (1367 aa).

Residues 110-151 form a disordered region; sequence TSSIPGSSGSASETNSGSDITKQDFKNDSPSDSKKVQGSSTS. Residues 111 to 127 are compositionally biased toward low complexity; sequence SSIPGSSGSASETNSGS. A compositionally biased stretch (basic and acidic residues) spans 130–144; that stretch reads TKQDFKNDSPSDSKK. Repeat copies occupy residues 188–200, 223–235, 251–263, 286–298, 314–326, 349–361, 377–389, 418–430, 432–444, 459–471, 473–485, and 500–512. The 12 X 13 AA approximate repeats stretch occupies residues 188 to 512; the sequence is KLGTVVDIVE…IGVDIVEPMK (325 aa). A PHD-type zinc finger spans residues 688 to 765; it reads HQICSPCHSR…EYICPTCLLE (78 aa). Residues 780–1213 enclose the CBP/p300-type HAT domain; it reads DSGAKDLPET…ILHHLHTSNK (434 aa). Acetyl-CoA-binding positions include 903–905, 922–923, and Trp978; these read LDS and RT. The segment at 1094–1157 adopts a ZZ-type 1; degenerate zinc-finger fold; it reads ELNYSCTRCS…QLSKVQVNGV (64 aa). Zn(2+) is bound by residues Cys1099, Cys1102, Cys1123, Cys1126, Cys1225, Cys1228, Cys1240, Cys1243, Cys1249, Cys1252, His1261, and His1263. A ZZ-type 2 zinc finger spans residues 1220–1273; sequence SSSLTCTACKKDVSTTIYFPCLLCPDYRACTGCYTKNRTLRHLHIFPTLPSANR. A TAZ-type zinc finger spans residues 1274–1359; it reads APSRTVMVLE…NCPVPQCRDR (86 aa).

In terms of tissue distribution, rosette leaves, stems and flowers.

It is found in the nucleus. It carries out the reaction L-lysyl-[protein] + acetyl-CoA = N(6)-acetyl-L-lysyl-[protein] + CoA + H(+). Its function is as follows. Acetyltransferase enzyme. Acetylates histones, giving a specific tag for transcriptional activation. No acetyltransferase activity found in vitro. The chain is Histone acetyltransferase HAC2 (HAC2) from Arabidopsis thaliana (Mouse-ear cress).